A 163-amino-acid chain; its full sequence is Probable calcium-binding protein CML26 (163 aa).

N-acetylalanine is present on Ala2. EF-hand domains are found at residues 16 to 51 (STDMELKKVFDKFDANGDGKISVSELGNVFKSMGTS), 52 to 82 (YTEEELNRVLDEIDIDCDGFINQEEFATICR), 85 to 120 (SSAVEIREAFDLYDQNKNGLISSSEIHKVLNRLGMT), and 121 to 156 (CSVEDCVRMIGHVDTDGDGNVNFEEFQKMMSSPELV). Ca(2+) contacts are provided by Asp29, Asn31, Asp33, Lys35, Glu40, Asp65, Asp67, Asp69, Glu76, Asp98, Asn100, Asn102, Glu109, Asp134, Asp136, Asp138, Asn140, and Glu145.

In terms of biological role, potential calcium sensor. The chain is Probable calcium-binding protein CML26 (CML26) from Arabidopsis thaliana (Mouse-ear cress).